Reading from the N-terminus, the 384-residue chain is Protein RecA (384 aa).

Position 76 to 83 (76 to 83 (GPESSGKT)) interacts with ATP. Residues 346-365 (QGSAEPEKAAKPEKVEKADK) form a disordered region. The segment covering 350–365 (EPEKAAKPEKVEKADK) has biased composition (basic and acidic residues).

The protein belongs to the RecA family.

The protein resides in the cytoplasm. Its function is as follows. Can catalyze the hydrolysis of ATP in the presence of single-stranded DNA, the ATP-dependent uptake of single-stranded DNA by duplex DNA, and the ATP-dependent hybridization of homologous single-stranded DNAs. It interacts with LexA causing its activation and leading to its autocatalytic cleavage. The polypeptide is Protein RecA (Polaromonas naphthalenivorans (strain CJ2)).